The following is an 86-amino-acid chain: U-myrmeciitoxin(01)-Mg1a (86 aa).

Residues 1-26 (MKLLYLLLTLAIIFVLTIVHAPNVEA) form the signal peptide. The propeptide occupies 27 to 52 (KALADPESDAVGFADAFGDADAEATG). The residue at position 85 (Leu-85) is a Leucine amide.

The protein belongs to the formicidae venom precursor-01 superfamily. In terms of tissue distribution, expressed by the venom gland. This toxin is detected along the entire venom gland, as well as in the venom reservoir, the venom duct and in the venom. No toxin are detected in the Dufour's gland.

The protein resides in the secreted. It localises to the target cell membrane. In terms of biological role, toxin that may interact with target cell membranes, producing a concentration-dependent leak in ion conductance, possibly via multimeric pore formation. It produces an immediate sharp increase of calcium concentration in all DRG neurons. This influx in calcium stabilizes without resulting in any observable dye leakage, showing that the effect is not simply cytolytic. This toxin may be one of the major contributors to the pain associated with envenomation. The toxin also displays a weak cytotoxicity (on HEK cells) and some antimicrobial activity (MIC=2.5 uM on C.neoformans (var. grubii), MIC=10.2 uM on S.aureus), but is not hemolytic to human erythtrocytes. In vivo, intraplantar injection into mice causes spontaneous nocifensive behavior (licking, flinching, or shaking of the paw), which lasts 5-7 minutes (10 and 100 uM tested). Mechanical and heat hypoalgesia are observed at 20 and 25 minutes after injection (highest dose tested of 100 uM). In vivo, injection into crickets (A.domesticus) causes an immediate, dose-dependent, reversible and nonlethal incapacitation that lasts about 53 minutes at the highest dose tested (60 ug/g). This Myrmecia gulosa (Red bulldog ant) protein is U-myrmeciitoxin(01)-Mg1a.